A 237-amino-acid polypeptide reads, in one-letter code: Putative ATP-binding protein BMEII0108 (237 aa).

Residues I5 to I205 enclose the ABC transporter domain. Residue G37–S44 participates in ATP binding.

Belongs to the ABC transporter superfamily. The complex is composed of two ATP-binding proteins (BMEII0108), two transmembrane proteins (BMEII0107) and a solute-binding protein (BMEII0109).

Its subcellular location is the cell inner membrane. Probably part of an ABC transporter complex. Probably Responsible for energy coupling to the transport system. In Brucella melitensis biotype 1 (strain ATCC 23456 / CCUG 17765 / NCTC 10094 / 16M), this protein is Putative ATP-binding protein BMEII0108.